Reading from the N-terminus, the 301-residue chain is L-threonate dehydrogenase (301 aa).

Residues Tyr6–Ile34 and Thr101 contribute to the NAD(+) site. The active site involves Lys177. NAD(+) is bound at residue Lys245.

The protein belongs to the HIBADH-related family. L-threonate dehydrogenase subfamily.

It catalyses the reaction L-threonate + NAD(+) = 2-dehydro-L-erythronate + NADH + H(+). Catalyzes oxidation of L-threonate to 2-oxo-tetronate. Can use either NAD(+) or NADP(+) as cosubstrate, with a preference for NAD(+). The polypeptide is L-threonate dehydrogenase (Haemophilus influenzae (strain ATCC 51907 / DSM 11121 / KW20 / Rd)).